A 140-amino-acid chain; its full sequence is Large ribosomal subunit protein uL11 (140 aa).

It belongs to the universal ribosomal protein uL11 family. Part of the ribosomal stalk of the 50S ribosomal subunit. Interacts with L10 and the large rRNA to form the base of the stalk. L10 forms an elongated spine to which L12 dimers bind in a sequential fashion forming a multimeric L10(L12)X complex. One or more lysine residues are methylated.

Forms part of the ribosomal stalk which helps the ribosome interact with GTP-bound translation factors. In Dehalococcoides mccartyi (strain CBDB1), this protein is Large ribosomal subunit protein uL11.